The sequence spans 425 residues: Serine--tRNA ligase 2 (425 aa).

An L-serine-binding site is contributed by 230–232 (TAE). 261–263 (REE) contributes to the ATP binding site. E284 is an L-serine binding site. ATP is bound at residue 348-351 (EISS). S383 is a binding site for L-serine.

Belongs to the class-II aminoacyl-tRNA synthetase family. Type-1 seryl-tRNA synthetase subfamily. Homodimer. The tRNA molecule binds across the dimer.

The protein localises to the cytoplasm. The catalysed reaction is tRNA(Ser) + L-serine + ATP = L-seryl-tRNA(Ser) + AMP + diphosphate + H(+). The enzyme catalyses tRNA(Sec) + L-serine + ATP = L-seryl-tRNA(Sec) + AMP + diphosphate + H(+). Its pathway is aminoacyl-tRNA biosynthesis; selenocysteinyl-tRNA(Sec) biosynthesis; L-seryl-tRNA(Sec) from L-serine and tRNA(Sec): step 1/1. Its function is as follows. Catalyzes the attachment of serine to tRNA(Ser). Is also able to aminoacylate tRNA(Sec) with serine, to form the misacylated tRNA L-seryl-tRNA(Sec), which will be further converted into selenocysteinyl-tRNA(Sec). The chain is Serine--tRNA ligase 2 from Lactiplantibacillus plantarum (strain ATCC BAA-793 / NCIMB 8826 / WCFS1) (Lactobacillus plantarum).